The sequence spans 465 residues: Deoxyguanosinetriphosphate triphosphohydrolase-like protein (465 aa).

The tract at residues 1 to 22 is disordered; the sequence is MKWDKLLNDKRRRESGVTRSKN. An HD domain is found at 63–252; it reads RLTHSMEVST…LEVADDIAYL (190 aa).

It belongs to the dGTPase family. Type 3 subfamily.

The sequence is that of Deoxyguanosinetriphosphate triphosphohydrolase-like protein from Listeria innocua serovar 6a (strain ATCC BAA-680 / CLIP 11262).